A 260-amino-acid polypeptide reads, in one-letter code: Large ribosomal subunit protein uL2y (260 aa).

The tract at residues 227–248 (RRDKSAGAKVGQIAARRTGRRR) is disordered.

This sequence belongs to the universal ribosomal protein uL2 family.

The chain is Large ribosomal subunit protein uL2y (RPL8B) from Arabidopsis thaliana (Mouse-ear cress).